Reading from the N-terminus, the 1104-residue chain is Collagenase ColA (1104 aa).

An N-terminal signal peptide occupies residues 1 to 39 (MKKNLKRGELTKLKLVERWSATFTLAAFILFNSSFKVLA). A propeptide spanning residues 40–86 (ADKKVENSNNGQITREINADQISKTELNNEVATDNNRPLGPSIAPSR) is cleaved from the precursor. The S1 metalloprotease domain stretch occupies residues 87–761 (ARNNKIYTFD…YVYDVVFHGM (675 aa)). Residues 93 to 367 (YTFDELNRMN…AANDLDLNFG (275 aa)) form an activator domain region. The tract at residues 377–646 (DFNKIKADAR…MDSLLNNIDN (270 aa)) is catalytic subdomain. Glu477 provides a ligand contact to Ca(2+). His502 lines the Zn(2+) pocket. Glu503 is a catalytic residue. His506 lines the Zn(2+) pocket. Ca(2+) is bound by residues Gly510, Val514, and Gly516. Glu534 is a binding site for Zn(2+). The segment at 654-767 (DEYVNGHEAK…FHGMNTDTNT (114 aa)) is helper subdomain. An S2 domain region spans residues 762-860 (NTDTNTDVHV…KKIKVVEDKP (99 aa)). Positions 772, 773, 800, 802, 841, 866, 868, 870, 894, 897, 993, 995, 997, 1016, 1020, 1022, and 1023 each coordinate Ca(2+). In terms of domain architecture, PKD spans 774 to 862 (EPKAVIKSDS…IKVVEDKPVE (89 aa)). The segment at 865–979 (NESEPNNDFE…TYTVNVKGNL (115 aa)) is S3a collagen-binding domain. The interval 992–1104 (KEVENNNDFD…GNYIVNLQNK (113 aa)) is S3b collagen-binding domain.

Belongs to the peptidase M9B family. Collagenase subfamily. Requires Ca(2+) as cofactor. It depends on Zn(2+) as a cofactor.

The protein resides in the secreted. It carries out the reaction Digestion of native collagen in the triple helical region at Xaa-|-Gly bonds. With synthetic peptides, a preference is shown for Gly at P3 and P1', Pro and Ala at P2 and P2', and hydroxyproline, Ala or Arg at P3'.. Its function is as follows. Clostridial collagenases are among the most efficient degraders of eukaryotic collagen known; saprophytes use collagen as a carbon source while pathogens additionally digest collagen to aid in host colonization. Has both tripeptidylcarboxypeptidase on Gly-X-Y and endopeptidase activities; the endopeptidase cuts within the triple helix region of collagen while tripeptidylcarboxypeptidase successively digests the exposed ends, thus clostridial collagenases can digest large sections of collagen. This chain is Collagenase ColA (colA), found in Clostridium perfringens (strain 13 / Type A).